A 398-amino-acid polypeptide reads, in one-letter code: Enoyl-[acyl-carrier-protein] reductase [NADH] (398 aa).

NAD(+) is bound by residues 48-53 (GASTGY), 74-75 (FE), 111-112 (DG), and 139-140 (LA). Tyrosine 225 provides a ligand contact to substrate. The Proton donor role is filled by tyrosine 235. Residues lysine 244 and 273-275 (VVT) contribute to the NAD(+) site.

This sequence belongs to the TER reductase family. Monomer.

The catalysed reaction is a 2,3-saturated acyl-[ACP] + NAD(+) = a (2E)-enoyl-[ACP] + NADH + H(+). The protein operates within lipid metabolism; fatty acid biosynthesis. Its function is as follows. Involved in the final reduction of the elongation cycle of fatty acid synthesis (FAS II). Catalyzes the reduction of a carbon-carbon double bond in an enoyl moiety that is covalently linked to an acyl carrier protein (ACP). This is Enoyl-[acyl-carrier-protein] reductase [NADH] from Variovorax paradoxus (strain S110).